Consider the following 380-residue polypeptide: Chaperone protein DnaJ 2 (380 aa).

The 66-residue stretch at 10-75 (DYYKILGVSK…KKRKEYDQAR (66 aa)) folds into the J domain. Positions 32–56 (KIARDNHPDSHPGDKAAEARFKEAS) are enriched in basic and acidic residues. Positions 32 to 63 (KIARDNHPDSHPGDKAAEARFKEASEANDVLS) are disordered. The segment at 151–230 (GTTVTMDMVS…CHGSGRAKST (80 aa)) adopts a CR-type zinc-finger fold. Zn(2+) contacts are provided by Cys-164, Cys-167, Cys-181, Cys-184, Cys-204, Cys-207, Cys-218, and Cys-221. CXXCXGXG motif repeat units follow at residues 164–171 (CQACRGTG), 181–188 (CSTCQGSG), 204–211 (CPDCHGRG), and 218–225 (CQVCHGSG).

Belongs to the DnaJ family. In terms of assembly, homodimer. The cofactor is Zn(2+).

It localises to the cytoplasm. In terms of biological role, participates actively in the response to hyperosmotic and heat shock by preventing the aggregation of stress-denatured proteins and by disaggregating proteins, also in an autonomous, DnaK-independent fashion. Unfolded proteins bind initially to DnaJ; upon interaction with the DnaJ-bound protein, DnaK hydrolyzes its bound ATP, resulting in the formation of a stable complex. GrpE releases ADP from DnaK; ATP binding to DnaK triggers the release of the substrate protein, thus completing the reaction cycle. Several rounds of ATP-dependent interactions between DnaJ, DnaK and GrpE are required for fully efficient folding. Also involved, together with DnaK and GrpE, in the DNA replication of plasmids through activation of initiation proteins. The chain is Chaperone protein DnaJ 2 from Cutibacterium acnes (strain DSM 16379 / KPA171202) (Propionibacterium acnes).